The following is an 870-amino-acid chain: Probable inorganic carbon transporter subunit DabA (870 aa).

Zn(2+)-binding residues include Cys-381, Asp-383, His-564, and Cys-579.

Belongs to the inorganic carbon transporter (TC 9.A.2) DabA family. In terms of assembly, forms a complex with DabB. Zn(2+) serves as cofactor.

Its subcellular location is the cell membrane. Functionally, part of an energy-coupled inorganic carbon pump. This Geobacillus kaustophilus (strain HTA426) protein is Probable inorganic carbon transporter subunit DabA.